Reading from the N-terminus, the 407-residue chain is Ran GTPase-activating protein 1 (407 aa).

LRR repeat units follow at residues 11–39 (EEEQ…EELA), 40–67 (ALKT…KCIA), 68–101 (ENTQ…KFLL), 102–133 (PVLL…DYIA), 134–166 (HAVN…LAQN), 167–197 (KKAA…ALGL), 198–226 (KSHS…IHYG), 227–256 (LQYL…KALP), 257–285 (TWKD…KVFT), 286–315 (EVKF…LPAM), and 316–346 (EKGN…LQSK). The segment at 353–378 (DDFEEVDSEDEEGEDEEDEDEDEKLE) is disordered. The residue at position 360 (Ser-360) is a Phosphoserine.

It belongs to the RNA1 family.

Its subcellular location is the cytoplasm. GTPase activator for the nuclear Ras-related regulatory protein GSP1 (Ran), converting it to the putatively inactive GDP-bound state. This Saccharomyces cerevisiae (strain ATCC 204508 / S288c) (Baker's yeast) protein is Ran GTPase-activating protein 1 (RNA1).